A 206-amino-acid polypeptide reads, in one-letter code: Ras-related protein Ral-B (206 aa).

21-29 (GSGGVGKSA) serves as a coordination point for GTP. The Effector region motif lies at 43–51 (YEPTKADSY). Residues 68–72 (DTAGQ), 128–131 (NKSD), and 158–160 (SAK) each bind GTP. Residues 181-206 (MSENKDKNGRKSGKSKKSFKERCCLL) are disordered. Residue C203 is modified to Cysteine methyl ester. C203 carries the S-geranylgeranyl cysteine lipid modification. Residues 204 to 206 (CLL) constitute a propeptide, removed in mature form.

It belongs to the small GTPase superfamily. Ras family. As to quaternary structure, interacts with EXOC2/Sec5 and EXOC8/Exo84. Interacts (via effector domain) with RALBP1. Post-translationally, prenylation is essential for membrane localization. In terms of processing, the farnesylated form confers resistance to the proapoptotic and anti-anchorage-dependent growth effects of some geranylgeranyltransferase I inhibitors.

It is found in the cell membrane. It localises to the midbody. The enzyme catalyses GTP + H2O = GDP + phosphate + H(+). Its activity is regulated as follows. Alternates between an inactive form bound to GDP and an active form bound to GTP. Activated by a guanine nucleotide-exchange factor (GEF) and inactivated by a GTPase-activating protein (GAP). Its function is as follows. Multifunctional GTPase involved in a variety of cellular processes including gene expression, cell migration, cell proliferation, oncogenic transformation and membrane trafficking. Accomplishes its multiple functions by interacting with distinct downstream effectors. Acts as a GTP sensor for GTP-dependent exocytosis of dense core vesicles. Required both to stabilize the assembly of the exocyst complex and to localize functional exocyst complexes to the leading edge of migrating cells. Required for suppression of apoptosis. In late stages of cytokinesis, upon completion of the bridge formation between dividing cells, mediates exocyst recruitment to the midbody to drive abscission. Involved in ligand-dependent receptor mediated endocytosis of the EGF and insulin receptors. The protein is Ras-related protein Ral-B (Ralb) of Rattus norvegicus (Rat).